Here is a 222-residue protein sequence, read N- to C-terminus: Probable GTP-binding protein EngB (222 aa).

Residues 27–202 form the EngB-type G domain; it reads TGIEVAFAGR…AKKLDEWFLG (176 aa). GTP contacts are provided by residues 35 to 42, 61 to 65, 81 to 84, 148 to 151, and 181 to 183; these read GRSNAGKS, GRTQL, DLPG, TKAD, and FSS. Residues Ser-42 and Thr-63 each coordinate Mg(2+).

It belongs to the TRAFAC class TrmE-Era-EngA-EngB-Septin-like GTPase superfamily. EngB GTPase family. Mg(2+) is required as a cofactor.

Necessary for normal cell division and for the maintenance of normal septation. This chain is Probable GTP-binding protein EngB, found in Pseudoalteromonas translucida (strain TAC 125).